The following is a 490-amino-acid chain: Protein twist (490 aa).

Disordered stretches follow at residues 48 to 74 (QLQH…QHTQ), 98 to 167 (PSNE…TGGS), and 330 to 359 (LDGS…ETDE). Basic residues predominate over residues 54-64 (QHLHSHQHHQQ). Low complexity-rich tracts occupy residues 65-74 (HQQQQQQHTQ) and 104-135 (STSS…NNPS). The segment covering 339 to 351 (AFRKPRRRLKRKP) has biased composition (basic residues). One can recognise a bHLH domain in the interval 362-413 (NQRVMANVRERQRTQSLNDAFKSLQQIIPTLPSDKLSKIQTLKLATRYIDFL).

In terms of assembly, efficient DNA binding requires dimerization with another bHLH protein. Homodimer.

It is found in the nucleus. Its function is as follows. Involved in the establishment and dorsoventral patterning of germ layers in the embryo. The chain is Protein twist from Drosophila erecta (Fruit fly).